Reading from the N-terminus, the 86-residue chain is Small ribosomal subunit protein bS20 (86 aa).

The disordered stretch occupies residues 1–27 (MANSKSAKKRAIQAEKRRQHNASRRSM).

The protein belongs to the bacterial ribosomal protein bS20 family.

Its function is as follows. Binds directly to 16S ribosomal RNA. The chain is Small ribosomal subunit protein bS20 from Vibrio atlanticus (strain LGP32) (Vibrio splendidus (strain Mel32)).